A 391-amino-acid polypeptide reads, in one-letter code: Elongation factor Tu (391 aa).

The tr-type G domain maps to 10-201 (KPHVNIGTIG…AVDEFIPTPE (192 aa)). The segment at 19–26 (GHVDHGKT) is G1. 19 to 26 (GHVDHGKT) serves as a coordination point for GTP. Mg(2+) is bound at residue T26. A G2 region spans residues 55–59 (GITIS). A G3 region spans residues 76–79 (DCPG). Residues 76–80 (DCPGH) and 131–134 (NKVD) contribute to the GTP site. Positions 131 to 134 (NKVD) are G4. A G5 region spans residues 169 to 171 (SAL).

It belongs to the TRAFAC class translation factor GTPase superfamily. Classic translation factor GTPase family. EF-Tu/EF-1A subfamily. Monomer.

It localises to the cytoplasm. The enzyme catalyses GTP + H2O = GDP + phosphate + H(+). Its function is as follows. GTP hydrolase that promotes the GTP-dependent binding of aminoacyl-tRNA to the A-site of ribosomes during protein biosynthesis. The chain is Elongation factor Tu from Roseobacter denitrificans (strain ATCC 33942 / OCh 114) (Erythrobacter sp. (strain OCh 114)).